The chain runs to 172 residues: MSSKRAKTKTTKKRPQRATSNVFAMFDQSQIQEFKEAFNMIDQNRDGFIDKEDLHDMLASLGKNPTDEYLDAMMNEAPGPINFTMFLTMFGEKLNGTDPEDVIRNAFACFDEEATGFIQEDYLRELLTTMGDRFTDEEVDELYREAPIDKKGNFNYIEFTRILKHGAKDKDD.

S2 bears the N-acetylserine mark. T19 bears the Phosphothreonine; by MLCK mark. Position 20 is a phosphoserine; by MLCK (S20). 3 consecutive EF-hand domains span residues 29 to 64 (SQIQ…LGKN), 98 to 133 (DPED…MGDR), and 134 to 169 (FTDE…GAKD). 4 residues coordinate Ca(2+): D42, N44, D46, and D53.

Myosin is a hexamer of 2 heavy chains and 4 light chains. Phosphorylation increases the actin-activated myosin ATPase activity and thereby regulates the contractile activity.

Its function is as follows. Myosin regulatory subunit that plays an important role in regulation of both smooth muscle and nonmuscle cell contractile activity. Implicated in cytokinesis, receptor capping, and cell locomotion. The chain is Myosin regulatory light chain 2, smooth muscle minor isoform from Gallus gallus (Chicken).